Here is a 416-residue protein sequence, read N- to C-terminus: Formyl-CoA:oxalate CoA-transferase (416 aa).

CoA is bound by residues 17 to 18 (QS), Arg38, 72 to 75 (LNTK), 96 to 98 (NFH), His104, and 137 to 140 (KAYE). Asp169 functions as the Nucleophile in the catalytic mechanism. 248-250 (GGQ) is a binding site for substrate. CoA is bound at residue 273 to 275 (QEQ).

It belongs to the CoA-transferase III family. Frc subfamily. In terms of assembly, homodimer.

It catalyses the reaction formyl-CoA + oxalate = oxalyl-CoA + formate. It participates in metabolic intermediate degradation; oxalate degradation; CO(2) and formate from oxalate: step 1/2. In terms of biological role, involved in the catabolism of oxalate and in the adapatation to low pH via the induction of the oxalate-dependent acid tolerance response (ATR). Catalyzes the transfer of the CoA moiety from formyl-CoA to oxalate. In Escherichia coli O17:K52:H18 (strain UMN026 / ExPEC), this protein is Formyl-CoA:oxalate CoA-transferase.